The following is a 368-amino-acid chain: UDP-N-acetylglucosamine--N-acetylmuramyl-(pentapeptide) pyrophosphoryl-undecaprenol N-acetylglucosamine transferase (368 aa).

Residues 13 to 15 (TGG), N127, R168, S200, I254, and Q299 each bind UDP-N-acetyl-alpha-D-glucosamine.

Belongs to the glycosyltransferase 28 family. MurG subfamily.

It is found in the cell inner membrane. The catalysed reaction is di-trans,octa-cis-undecaprenyl diphospho-N-acetyl-alpha-D-muramoyl-L-alanyl-D-glutamyl-meso-2,6-diaminopimeloyl-D-alanyl-D-alanine + UDP-N-acetyl-alpha-D-glucosamine = di-trans,octa-cis-undecaprenyl diphospho-[N-acetyl-alpha-D-glucosaminyl-(1-&gt;4)]-N-acetyl-alpha-D-muramoyl-L-alanyl-D-glutamyl-meso-2,6-diaminopimeloyl-D-alanyl-D-alanine + UDP + H(+). It participates in cell wall biogenesis; peptidoglycan biosynthesis. In terms of biological role, cell wall formation. Catalyzes the transfer of a GlcNAc subunit on undecaprenyl-pyrophosphoryl-MurNAc-pentapeptide (lipid intermediate I) to form undecaprenyl-pyrophosphoryl-MurNAc-(pentapeptide)GlcNAc (lipid intermediate II). This is UDP-N-acetylglucosamine--N-acetylmuramyl-(pentapeptide) pyrophosphoryl-undecaprenol N-acetylglucosamine transferase from Parabacteroides distasonis (strain ATCC 8503 / DSM 20701 / CIP 104284 / JCM 5825 / NCTC 11152).